Reading from the N-terminus, the 265-residue chain is 4-hydroxy-tetrahydrodipicolinate reductase (265 aa).

NAD(+)-binding positions include 7 to 12 (GASGRM) and Asp-33. Residue Arg-34 coordinates NADP(+). NAD(+)-binding positions include 96 to 98 (GTT) and 120 to 123 (AANM). The active-site Proton donor/acceptor is His-153. His-154 contacts (S)-2,3,4,5-tetrahydrodipicolinate. Catalysis depends on Lys-157, which acts as the Proton donor. Residue 163–164 (GT) participates in (S)-2,3,4,5-tetrahydrodipicolinate binding.

It belongs to the DapB family.

It localises to the cytoplasm. The catalysed reaction is (S)-2,3,4,5-tetrahydrodipicolinate + NAD(+) + H2O = (2S,4S)-4-hydroxy-2,3,4,5-tetrahydrodipicolinate + NADH + H(+). The enzyme catalyses (S)-2,3,4,5-tetrahydrodipicolinate + NADP(+) + H2O = (2S,4S)-4-hydroxy-2,3,4,5-tetrahydrodipicolinate + NADPH + H(+). Its pathway is amino-acid biosynthesis; L-lysine biosynthesis via DAP pathway; (S)-tetrahydrodipicolinate from L-aspartate: step 4/4. In terms of biological role, catalyzes the conversion of 4-hydroxy-tetrahydrodipicolinate (HTPA) to tetrahydrodipicolinate. This Burkholderia ambifaria (strain MC40-6) protein is 4-hydroxy-tetrahydrodipicolinate reductase.